A 62-amino-acid chain; its full sequence is MKFSYFLLLLLSLSNFQNNPVAMLDTIACIENKDTCRLKNCPRLHNVVGTCYEGKGKCCHKN.

A signal peptide spans 1–16 (MKFSYFLLLLLSLSNF). Cystine bridges form between C29/C58, C36/C51, and C41/C59.

It belongs to the beta-defensin family. In terms of tissue distribution, only expressed in epididymis (corpus and cauda).

It is found in the secreted. Has antibacterial activity. The protein is Beta-defensin 37 (Defb37) of Mus musculus (Mouse).